The following is a 660-amino-acid chain: Tripartite terminase subunit 3 (660 aa).

The Walker A motif motif lies at 203–210; the sequence is VPRRHGKT. The Walker B motif signature appears at 294-299; sequence ILLVDE. Glutamate 299 functions as the For ATPase activity in the catalytic mechanism. Residues aspartate 452, glutamate 523, and aspartate 637 each act as for nuclease activity in the active site.

It belongs to the herpesviridae TRM3 protein family. As to quaternary structure, interacts with the terminase subunits TRM1 and TRM2. Interacts with portal protein.

The protein localises to the host nucleus. In terms of biological role, component of the molecular motor that translocates viral genomic DNA in empty capsid during DNA packaging. Forms a tripartite terminase complex together with TRM1 and TRM2 in the host cytoplasm. Once the complex reaches the host nucleus, it interacts with the capsid portal vertex. This portal forms a ring in which genomic DNA is translocated into the capsid. TRM3 carries an RNase H-like nuclease activity that plays an important role for the cleavage of concatemeric viral DNA into unit length genomes. This is Tripartite terminase subunit 3 from Elephas maximus (Indian elephant).